The chain runs to 319 residues: Ficolin-2 (319 aa).

The first 22 residues, 1–22 (MVLGSAALFVLSLCVTELTLHA), serve as a signal peptide directing secretion. The region spanning 45–101 (GCPGLPGALGPKGEAGAKGDRGESGLPGHPGKAGPTGPKGDRGEKGVRGEKGDTGPS) is the Collagen-like domain. The interval 53-106 (LGPKGEAGAKGDRGESGLPGHPGKAGPTGPKGDRGEKGVRGEKGDTGPSQSCAT) is disordered. Residues 83–97 (KGDRGEKGVRGEKGD) are compositionally biased toward basic and acidic residues. The 218-residue stretch at 102 to 319 (QSCATGPRTC…KVSEMKVRLI (218 aa)) folds into the Fibrinogen C-terminal domain. Cystine bridges form between C104–C132 and C111–C139. Ca(2+) contacts are provided by D255, D257, and S261. A disulfide bond links C263 and C276. N306 is a glycosylation site (N-linked (GlcNAc...) asparagine).

This sequence belongs to the ficolin lectin family. As to quaternary structure, homotrimer. Interacts with elastin. Interacts with MASP1 and MASP2.

Its subcellular location is the secreted. Functionally, may function in innate immunity through activation of the lectin complement pathway. Calcium-dependent and GlcNAc-binding lectin. The polypeptide is Ficolin-2 (Fcn2) (Rattus norvegicus (Rat)).